An 81-amino-acid polypeptide reads, in one-letter code: ATP synthase subunit c, chloroplastic (81 aa).

2 consecutive transmembrane segments (helical) span residues 3–23 (PLIS…ASIG) and 57–77 (LAFM…LLFA).

Belongs to the ATPase C chain family. In terms of assembly, F-type ATPases have 2 components, F(1) - the catalytic core - and F(0) - the membrane proton channel. F(1) has five subunits: alpha(3), beta(3), gamma(1), delta(1), epsilon(1). F(0) has four main subunits: a(1), b(1), b'(1) and c(10-14). The alpha and beta chains form an alternating ring which encloses part of the gamma chain. F(1) is attached to F(0) by a central stalk formed by the gamma and epsilon chains, while a peripheral stalk is formed by the delta, b and b' chains.

The protein resides in the plastid. It is found in the chloroplast thylakoid membrane. Its function is as follows. F(1)F(0) ATP synthase produces ATP from ADP in the presence of a proton or sodium gradient. F-type ATPases consist of two structural domains, F(1) containing the extramembraneous catalytic core and F(0) containing the membrane proton channel, linked together by a central stalk and a peripheral stalk. During catalysis, ATP synthesis in the catalytic domain of F(1) is coupled via a rotary mechanism of the central stalk subunits to proton translocation. Functionally, key component of the F(0) channel; it plays a direct role in translocation across the membrane. A homomeric c-ring of between 10-14 subunits forms the central stalk rotor element with the F(1) delta and epsilon subunits. This chain is ATP synthase subunit c, chloroplastic, found in Ipomoea purpurea (Common morning glory).